Here is a 122-residue protein sequence, read N- to C-terminus: Large ribosomal subunit protein uL29B (122 aa).

A coiled-coil region spans residues 10-69; the sequence is QLGIKQIEERAAEIKAELAALRQKKNSGDVGANDIKTAKKNLARALTVRREKILEELVEA.

Belongs to the universal ribosomal protein uL29 family. Component of the large ribosomal subunit.

It is found in the cytoplasm. This Encephalitozoon cuniculi (strain GB-M1) (Microsporidian parasite) protein is Large ribosomal subunit protein uL29B (RPL35C).